A 599-amino-acid polypeptide reads, in one-letter code: Elongation factor 4 (599 aa).

Residues 2–184 (KNIRNFSIIA…RLVRDIPPPE (183 aa)) enclose the tr-type G domain. GTP is bound by residues 14–19 (DHGKST) and 131–134 (NKID).

Belongs to the TRAFAC class translation factor GTPase superfamily. Classic translation factor GTPase family. LepA subfamily.

The protein resides in the cell inner membrane. The enzyme catalyses GTP + H2O = GDP + phosphate + H(+). Its function is as follows. Required for accurate and efficient protein synthesis under certain stress conditions. May act as a fidelity factor of the translation reaction, by catalyzing a one-codon backward translocation of tRNAs on improperly translocated ribosomes. Back-translocation proceeds from a post-translocation (POST) complex to a pre-translocation (PRE) complex, thus giving elongation factor G a second chance to translocate the tRNAs correctly. Binds to ribosomes in a GTP-dependent manner. This Klebsiella pneumoniae (strain 342) protein is Elongation factor 4.